The primary structure comprises 153 residues: Cytochrome c-554 (153 aa).

Positions 1–20 are cleaved as a signal peptide; the sequence is MRPIPALALTFSLVAMPALA. Pyrrolidone carboxylic acid is present on Gln-21. Heme c is bound by residues Met-37, Cys-142, Cys-145, and His-146.

Binds 1 heme c group covalently per subunit.

It localises to the periplasm. In terms of biological role, monoheme c-type cytochrome, that is particularly expressed when cells generate energy via aerobic respiration. The protein is Cytochrome c-554 (cycF) of Cereibacter sphaeroides (strain ATCC 17023 / DSM 158 / JCM 6121 / CCUG 31486 / LMG 2827 / NBRC 12203 / NCIMB 8253 / ATH 2.4.1.) (Rhodobacter sphaeroides).